The sequence spans 128 residues: Transmembrane protein 234 homolog (128 aa).

4 helical membrane-spanning segments follow: residues 3-23 (TYNI…NPLI), 53-73 (PSYT…FYTL), 80-100 (LVVP…GMLL), and 104-124 (VLHF…TICV).

It belongs to the TMEM234 family.

The protein resides in the membrane. The chain is Transmembrane protein 234 homolog from Dictyostelium discoideum (Social amoeba).